Consider the following 536-residue polypeptide: Ribulokinase (536 aa).

The protein belongs to the ribulokinase family.

It carries out the reaction D-ribulose + ATP = D-ribulose 5-phosphate + ADP + H(+). The catalysed reaction is L-ribulose + ATP = L-ribulose 5-phosphate + ADP + H(+). It functions in the pathway carbohydrate degradation; L-arabinose degradation via L-ribulose; D-xylulose 5-phosphate from L-arabinose (bacterial route): step 2/3. The protein is Ribulokinase of Staphylococcus epidermidis (strain ATCC 35984 / DSM 28319 / BCRC 17069 / CCUG 31568 / BM 3577 / RP62A).